We begin with the raw amino-acid sequence, 37 residues long: Large ribosomal subunit protein bL36 (37 aa).

It belongs to the bacterial ribosomal protein bL36 family.

The protein is Large ribosomal subunit protein bL36 of Nostoc sp. (strain PCC 7120 / SAG 25.82 / UTEX 2576).